The primary structure comprises 587 residues: Aspartate--tRNA ligase (587 aa).

L-aspartate is bound at residue Glu174. Positions 198–201 (QITK) are aspartate. Arg220 is a binding site for L-aspartate. ATP is bound by residues 220 to 222 (RDE) and Gln229. Position 443 (His443) interacts with L-aspartate. An ATP-binding site is contributed by Glu477. Arg484 is an L-aspartate binding site. Position 529 to 532 (529 to 532 (GLDR)) interacts with ATP.

This sequence belongs to the class-II aminoacyl-tRNA synthetase family. Type 1 subfamily. In terms of assembly, homodimer.

It is found in the cytoplasm. The catalysed reaction is tRNA(Asp) + L-aspartate + ATP = L-aspartyl-tRNA(Asp) + AMP + diphosphate. Catalyzes the attachment of L-aspartate to tRNA(Asp) in a two-step reaction: L-aspartate is first activated by ATP to form Asp-AMP and then transferred to the acceptor end of tRNA(Asp). The sequence is that of Aspartate--tRNA ligase from Streptococcus pneumoniae (strain ATCC 700669 / Spain 23F-1).